Here is a 268-residue protein sequence, read N- to C-terminus: tRNA pseudouridine synthase A (268 aa).

Catalysis depends on Asp52, which acts as the Nucleophile. Tyr110 lines the substrate pocket.

Belongs to the tRNA pseudouridine synthase TruA family. As to quaternary structure, homodimer.

It catalyses the reaction uridine(38/39/40) in tRNA = pseudouridine(38/39/40) in tRNA. Functionally, formation of pseudouridine at positions 38, 39 and 40 in the anticodon stem and loop of transfer RNAs. The protein is tRNA pseudouridine synthase A of Prochlorococcus marinus (strain MIT 9312).